Reading from the N-terminus, the 342-residue chain is Delta(6)-protoilludene synthase (342 aa).

Asp-81, Asn-217, Ser-221, and Glu-225 together coordinate Mg(2+). Positions 81 to 85 (DEYSD) match the DDXXD motif motif. Arg-306 and Tyr-307 together coordinate (2E,6E)-farnesyl diphosphate.

This sequence belongs to the terpene synthase family. Requires Mg(2+) as cofactor.

It catalyses the reaction (2E,6E)-farnesyl diphosphate = Delta(6)-protoilludene + diphosphate. Functionally, delta(6)-protoilludene synthase, part of the gene cluster that mediates the biosynthesis of melleolides, a range of antifungal and phytotoxic polyketide derivatives composed of an orsellinic acid (OA) moiety esterified to various sesquiterpene alcohols. The first step in melleolides biosynthesis is performed by the delta(6)-protoilludene synthase PRO1 which catalyzes the cyclization of farnesyl diphosphate to protoilludene. The orsellinic acid synthase armB produces OA by condensing acetyl-CoA with 3 malonyl-CoA units in a three-round chain elongation reaction folowed by a C2-C7 ring closure. ArmB further catalyzes the trans-esterification of OA to the various sesquiterpene alcohols resulting from the hydroxylation of protoilludene. The melleolides cluster also includes 5 cytochrome P450 monooxygenases, 4 NAD(+)-dependent oxidoreductases, one flavin-dependent oxidoreductase, and one O-methyltransferase. The cytochrome P450 monooxygenases may be involved in protoilludene hydroxylation to elaborate melleolides with multiple alcohol groups, such as melleolide D, which carries alcohol functionalities at C-4, C-5, C-10, and C-13. The role of the NAD(+)-dependent enzymes remains unknown. Numerous melleolides, including arnamial, show 5'-O-methylation of the aromatic moiety which may be catalyzed by the methyltransferase encoded in the cluster. The flavin-dependent oxidoreductase might represent the dehydrogenase yielding the aldehyde in position 1 of arnamial and other melleolides. Finally, several halogenases, localized outside of the cluster, are able to catalyze the transfer of a single chlorine atom to the melleolide backbone, resulting in a 6'-chloromelleolide product. The chain is Delta(6)-protoilludene synthase from Armillaria ostoyae (Armillaria root rot fungus).